We begin with the raw amino-acid sequence, 576 residues long: Arginine--tRNA ligase (576 aa).

Positions 123 to 133 (PNIGKEMHVGH) match the 'HIGH' region motif.

The protein belongs to the class-I aminoacyl-tRNA synthetase family. As to quaternary structure, monomer.

It localises to the cytoplasm. The enzyme catalyses tRNA(Arg) + L-arginine + ATP = L-arginyl-tRNA(Arg) + AMP + diphosphate. The protein is Arginine--tRNA ligase of Wigglesworthia glossinidia brevipalpis.